Reading from the N-terminus, the 114-residue chain is Non-specific lipid-transfer protein 1 (114 aa).

Residues 1–23 form the signal peptide; sequence MEMVSKIACFVLLCMVVVAPHAE. Disulfide bonds link cysteine 27–cysteine 73, cysteine 37–cysteine 50, cysteine 51–cysteine 96, and cysteine 71–cysteine 110.

It belongs to the plant LTP family.

Functionally, plant non-specific lipid-transfer proteins transfer phospholipids as well as galactolipids across membranes. May play a role in wax or cutin deposition in the cell walls of expanding epidermal cells and certain secretory tissues. This is Non-specific lipid-transfer protein 1 (TSW12) from Solanum lycopersicum (Tomato).